Here is a 500-residue protein sequence, read N- to C-terminus: NAD(P)H-quinone oxidoreductase chain 4, chloroplastic (500 aa).

14 helical membrane passes run 4-24, 35-55, 87-107, 113-130, 134-154, 167-187, 208-228, 242-262, 272-292, 305-325, 330-350, 386-406, 416-436, and 462-482; these read FPWLTIIVVFPIFAGSLIFFL, YTICICILELLLTTYAFCYHF, IGPILLTGFITTLATLAAWPV, LFHFLMLAMYSGQIGLFS, LLLFFIMWELELIPVYLLLAM, FILYTAGGSVFLLMGVLGVAL, VLEIIFYIGFFIAFAVKSPII, HYSTCMLLAGILLKMGAYGLI, AHSIFSPWLMIIGTIQIIYAA, IAYSSVSHMGFIIIGISSLTD, GALLQIISHGFIGAALFFLAG, LALPGMSGFVAELIVFFGIIT, LLITFVMAIGIILTPIYSLSM, and LFLSISIFLPVIGIGIYPDFV.

This sequence belongs to the complex I subunit 4 family.

It is found in the plastid. Its subcellular location is the chloroplast thylakoid membrane. It carries out the reaction a plastoquinone + NADH + (n+1) H(+)(in) = a plastoquinol + NAD(+) + n H(+)(out). The catalysed reaction is a plastoquinone + NADPH + (n+1) H(+)(in) = a plastoquinol + NADP(+) + n H(+)(out). The chain is NAD(P)H-quinone oxidoreductase chain 4, chloroplastic from Solanum lycopersicum (Tomato).